The primary structure comprises 376 residues: Glutamate 5-kinase (376 aa).

Lys15 provides a ligand contact to ATP. The substrate site is built by Ser56, Asp143, and Asn155. Ser175–Asp176 lines the ATP pocket. One can recognise a PUA domain in the interval Lys281–Thr358.

Belongs to the glutamate 5-kinase family.

The protein localises to the cytoplasm. It catalyses the reaction L-glutamate + ATP = L-glutamyl 5-phosphate + ADP. It functions in the pathway amino-acid biosynthesis; L-proline biosynthesis; L-glutamate 5-semialdehyde from L-glutamate: step 1/2. Functionally, catalyzes the transfer of a phosphate group to glutamate to form L-glutamate 5-phosphate. This chain is Glutamate 5-kinase, found in Rhodopseudomonas palustris (strain TIE-1).